Reading from the N-terminus, the 524-residue chain is Coronin-2A (524 aa).

WD repeat units lie at residues 80–120, 130–170, 178–217, 220–263, and 269–308; these read GHRG…LTRN, GHAR…SVIA, CHQD…VLQE, YKGH…VPLT, and GSSG…PHLT. Residues 403–436 are disordered; the sequence is LLDSQTLPPERPLSNSMVQVSPQPLEPMKQPAED. Positions 404–424 are enriched in polar residues; the sequence is LDSQTLPPERPLSNSMVQVSP. A coiled-coil region spans residues 484-523; sequence QMFYRQQEEIRRLRELLIQREVQTKQLELEIKNLRMALGQ.

The protein belongs to the WD repeat coronin family. In terms of assembly, binds actin. Component of the N-Cor repressor complex, at least composed of NCOR1, NCOR2, HDAC3, TBL1X, TBL1R, CORO2A and GPS2.

The chain is Coronin-2A (Coro2a) from Mus musculus (Mouse).